A 232-amino-acid polypeptide reads, in one-letter code: Demethylmenaquinone methyltransferase (232 aa).

S-adenosyl-L-methionine is bound by residues Thr58, Asp79, and 104–105 (NA).

The protein belongs to the class I-like SAM-binding methyltransferase superfamily. MenG/UbiE family.

The catalysed reaction is a 2-demethylmenaquinol + S-adenosyl-L-methionine = a menaquinol + S-adenosyl-L-homocysteine + H(+). The protein operates within quinol/quinone metabolism; menaquinone biosynthesis; menaquinol from 1,4-dihydroxy-2-naphthoate: step 2/2. Functionally, methyltransferase required for the conversion of demethylmenaquinol (DMKH2) to menaquinol (MKH2). The protein is Demethylmenaquinone methyltransferase of Bacillus licheniformis (strain ATCC 14580 / DSM 13 / JCM 2505 / CCUG 7422 / NBRC 12200 / NCIMB 9375 / NCTC 10341 / NRRL NRS-1264 / Gibson 46).